The following is a 118-amino-acid chain: Large ribosomal subunit protein bL20 (118 aa).

The protein belongs to the bacterial ribosomal protein bL20 family.

Functionally, binds directly to 23S ribosomal RNA and is necessary for the in vitro assembly process of the 50S ribosomal subunit. It is not involved in the protein synthesizing functions of that subunit. The polypeptide is Large ribosomal subunit protein bL20 (Macrococcus caseolyticus (strain JCSC5402) (Macrococcoides caseolyticum)).